Reading from the N-terminus, the 407-residue chain is Transcriptional regulator alnR (407 aa).

The zn(2)-C6 fungal-type DNA-binding region spans 23 to 53; it reads SCDTCQEAKVKCSQHKPSCHRCLRHRQPCVY. The tract at residues 53 to 85 is disordered; sequence YSPQRRSGRPPKRPSPSSRLGPESNNSGDDIHN. Residues 75-85 show a composition bias toward polar residues; that stretch reads ESNNSGDDIHN.

It localises to the nucleus. Transcriptional regulator involved in the positive regulation of the expression of the gene cluster that mediates the biosynthesis of asperlin, a polyketide showing anti-inflammatory, antitumor and antibiotic activities. This is Transcriptional regulator alnR from Emericella nidulans (strain FGSC A4 / ATCC 38163 / CBS 112.46 / NRRL 194 / M139) (Aspergillus nidulans).